The primary structure comprises 523 residues: Mitochondrial distribution and morphology protein 34 (523 aa).

The region spanning 1–200 (MSFKVNWKSL…LPTLIHQFSL (200 aa)) is the SMP-LTD domain. The disordered stretch occupies residues 489–523 (ELSMDRSGKRKQRNYGSATYESENPIVAPPPPYSH).

The protein belongs to the MDM34 family. In terms of assembly, component of the ER-mitochondria encounter structure (ERMES) or MDM complex, composed of MMM1, MDM10, MDM12 and MDM34.

The protein resides in the mitochondrion outer membrane. Functionally, component of the ERMES/MDM complex, which serves as a molecular tether to connect the endoplasmic reticulum (ER) and mitochondria. Components of this complex are involved in the control of mitochondrial shape and protein biogenesis, and function in nonvesicular lipid trafficking between the ER and mitochondria. MDM34 is required for the interaction of the ER-resident membrane protein MMM1 and the outer mitochondrial membrane-resident beta-barrel protein MDM10. The chain is Mitochondrial distribution and morphology protein 34 from Scheffersomyces stipitis (strain ATCC 58785 / CBS 6054 / NBRC 10063 / NRRL Y-11545) (Yeast).